The following is a 485-amino-acid chain: Inosine-5'-monophosphate dehydrogenase (485 aa).

2 consecutive CBS domains span residues 97-154 (IIRD…VSDV) and 155-211 (MVRD…PDAS). Residues Asp246 and 295–297 (GIG) contribute to the NAD(+) site. K(+)-binding residues include Gly297 and Gly299. Ser300 serves as a coordination point for IMP. Residue Cys302 coordinates K(+). Residue Cys302 is the Thioimidate intermediate of the active site. IMP-binding positions include 335-337 (DGG), 358-359 (GS), and 382-386 (YRGMG). Arg398 (proton acceptor) is an active-site residue. Glu409 is a binding site for IMP. Positions 463, 464, and 465 each coordinate K(+).

This sequence belongs to the IMPDH/GMPR family. In terms of assembly, homotetramer. K(+) is required as a cofactor.

It catalyses the reaction IMP + NAD(+) + H2O = XMP + NADH + H(+). The protein operates within purine metabolism; XMP biosynthesis via de novo pathway; XMP from IMP: step 1/1. Its activity is regulated as follows. Mycophenolic acid (MPA) is a non-competitive inhibitor that prevents formation of the closed enzyme conformation by binding to the same site as the amobile flap. In contrast, mizoribine monophosphate (MZP) is a competitive inhibitor that induces the closed conformation. MPA is a potent inhibitor of mammalian IMPDHs but a poor inhibitor of the bacterial enzymes. MZP is a more potent inhibitor of bacterial IMPDH. Its function is as follows. Catalyzes the conversion of inosine 5'-phosphate (IMP) to xanthosine 5'-phosphate (XMP), the first committed and rate-limiting step in the de novo synthesis of guanine nucleotides, and therefore plays an important role in the regulation of cell growth. This chain is Inosine-5'-monophosphate dehydrogenase, found in Thermoplasma acidophilum (strain ATCC 25905 / DSM 1728 / JCM 9062 / NBRC 15155 / AMRC-C165).